The chain runs to 445 residues: 6-phosphogluconate dehydrogenase, decarboxylating (445 aa).

Residues 1–4, 22–24, 63–65, and Asn91 each bind NADP(+); these read AVMG, NRS, and VKA. Substrate is bound by residues Asn91 and 117–119; that span reads SGG. Catalysis depends on Lys172, which acts as the Proton acceptor. Substrate is bound at residue 175–176; it reads HN. The Proton donor role is filled by Glu179. Substrate is bound by residues Tyr180, Lys249, Arg276, Arg434, and His440.

Belongs to the 6-phosphogluconate dehydrogenase family. Homodimer.

The enzyme catalyses 6-phospho-D-gluconate + NADP(+) = D-ribulose 5-phosphate + CO2 + NADPH. It participates in carbohydrate degradation; pentose phosphate pathway; D-ribulose 5-phosphate from D-glucose 6-phosphate (oxidative stage): step 3/3. Functionally, catalyzes the oxidative decarboxylation of 6-phosphogluconate to ribulose 5-phosphate and CO(2), with concomitant reduction of NADP to NADPH. The protein is 6-phosphogluconate dehydrogenase, decarboxylating (gnd) of Citrobacter freundii.